Reading from the N-terminus, the 24-residue chain is Protein YahV (24 aa).

The helical transmembrane segment at 4–24 threads the bilayer; sequence ILLNVLNIVFIGIAIILVIIC.

It localises to the cell inner membrane. The polypeptide is Protein YahV (Escherichia coli (strain K12)).